The primary structure comprises 344 residues: MTQSQQSHRKDEHVFLAEKYFQSVAHAGFDQVRLLHRALPETTMAAVDLKPDLPFNWQWPIYINAMTGGSPQTGKLNAQLGQLAQALGVAIASGSQSVALRDPQLVPTFATLRDHDPNGFILANVGAGHHATAAEAAVAMLKANALEIHLNAAQEVIMPEGDRDFMWQANIKSIIATSQVPIVVKEVGNGFIREDLQSLQQLGVQFVDVGGRGGTNFATIENARRSGHDFAYLQDWGQTTVESLLEARGLGLAMLATGGVRSPLDVVKALRLGAHAVGMSGLVLHHLIQTGYEATLAYFQNFLHQLRQLYALLGVTNWQELQEAPIVLSADLEHYRQARGLPGI.

Residue 9–10 (RK) participates in substrate binding. FMN is bound by residues 65-67 (AMT), serine 95, and asparagine 124. A substrate-binding site is contributed by glutamine 154. Glutamate 155 is a binding site for Mg(2+). Residues lysine 185, threonine 215, 259-261 (GVR), and 280-281 (SG) contribute to the FMN site.

This sequence belongs to the IPP isomerase type 2 family. As to quaternary structure, homooctamer. Dimer of tetramers. It depends on FMN as a cofactor. The cofactor is NADPH. Mg(2+) serves as cofactor.

It is found in the cytoplasm. It catalyses the reaction isopentenyl diphosphate = dimethylallyl diphosphate. In terms of biological role, involved in the biosynthesis of isoprenoids. Catalyzes the 1,3-allylic rearrangement of the homoallylic substrate isopentenyl (IPP) to its allylic isomer, dimethylallyl diphosphate (DMAPP). The chain is Isopentenyl-diphosphate delta-isomerase from Lacticaseibacillus casei (strain BL23) (Lactobacillus casei).